The chain runs to 99 residues: Integration host factor subunit alpha (99 aa).

It belongs to the bacterial histone-like protein family. In terms of assembly, heterodimer of an alpha and a beta chain.

Its function is as follows. This protein is one of the two subunits of integration host factor, a specific DNA-binding protein that functions in genetic recombination as well as in transcriptional and translational control. This Xanthomonas axonopodis pv. citri (strain 306) protein is Integration host factor subunit alpha (ihfA).